The primary structure comprises 229 residues: Small ribosomal subunit protein uS3 (229 aa).

The KH type-2 domain maps to 39–109 (MRKYIKEQLM…QVNIDIVEIR (71 aa)). The disordered stretch occupies residues 210–229 (VVSQQNSRPSGPRGPRRPRA).

This sequence belongs to the universal ribosomal protein uS3 family. In terms of assembly, part of the 30S ribosomal subunit. Forms a tight complex with proteins S10 and S14.

Functionally, binds the lower part of the 30S subunit head. Binds mRNA in the 70S ribosome, positioning it for translation. The sequence is that of Small ribosomal subunit protein uS3 from Akkermansia muciniphila (strain ATCC BAA-835 / DSM 22959 / JCM 33894 / BCRC 81048 / CCUG 64013 / CIP 107961 / Muc).